Reading from the N-terminus, the 301-residue chain is NAD kinase (301 aa).

The active-site Proton acceptor is Asp84. NAD(+) is bound by residues 84–85 (DG), Arg89, 158–159 (NE), Lys169, Asn188, 199–204 (TAYSFS), and Gln258.

Belongs to the NAD kinase family. A divalent metal cation serves as cofactor.

The protein resides in the cytoplasm. The catalysed reaction is NAD(+) + ATP = ADP + NADP(+) + H(+). Its function is as follows. Involved in the regulation of the intracellular balance of NAD and NADP, and is a key enzyme in the biosynthesis of NADP. Catalyzes specifically the phosphorylation on 2'-hydroxyl of the adenosine moiety of NAD to yield NADP. The sequence is that of NAD kinase from Tropheryma whipplei (strain Twist) (Whipple's bacillus).